Consider the following 527-residue polypeptide: Peptide chain release factor 3 (527 aa).

In terms of domain architecture, tr-type G spans 10 to 278 (DKRRTFAIIS…AFIEYAPAPL (269 aa)). GTP-binding positions include 19–26 (SHPDAGKT), 87–91 (DTPGH), and 141–144 (NKLD).

This sequence belongs to the TRAFAC class translation factor GTPase superfamily. Classic translation factor GTPase family. PrfC subfamily.

It localises to the cytoplasm. Functionally, increases the formation of ribosomal termination complexes and stimulates activities of RF-1 and RF-2. It binds guanine nucleotides and has strong preference for UGA stop codons. It may interact directly with the ribosome. The stimulation of RF-1 and RF-2 is significantly reduced by GTP and GDP, but not by GMP. This Pelobacter propionicus (strain DSM 2379 / NBRC 103807 / OttBd1) protein is Peptide chain release factor 3.